A 142-amino-acid chain; its full sequence is Hemoglobin subunit alpha-4 (142 aa).

A Globin domain is found at 2–142; it reads VLSAADKSNV…VSTVLTSKYR (141 aa). His59 lines the O2 pocket. His88 provides a ligand contact to heme b.

The protein belongs to the globin family. Heterotetramer of two alpha chains and two beta chains. As to expression, red blood cells.

Its function is as follows. Involved in oxygen transport from the lung to the various peripheral tissues. This chain is Hemoglobin subunit alpha-4, found in Bubalus bubalis (Domestic water buffalo).